The chain runs to 142 residues: Sec-independent protein translocase protein TatB (142 aa).

A helical transmembrane segment spans residues 1–21; it reads MFDFGFSELVVIGVVMLIVVG. Residues 99-142 are disordered; sequence AAPPDNTTSAESQAAADPAAVDSSQQLELRLDTTPKQVVGSDKA. Residues 107–124 show a composition bias toward low complexity; sequence SAESQAAADPAAVDSSQQ.

This sequence belongs to the TatB family. The Tat system comprises two distinct complexes: a TatABC complex, containing multiple copies of TatA, TatB and TatC subunits, and a separate TatA complex, containing only TatA subunits. Substrates initially bind to the TatABC complex, which probably triggers association of the separate TatA complex to form the active translocon.

The protein localises to the cell inner membrane. Its function is as follows. Part of the twin-arginine translocation (Tat) system that transports large folded proteins containing a characteristic twin-arginine motif in their signal peptide across membranes. Together with TatC, TatB is part of a receptor directly interacting with Tat signal peptides. TatB may form an oligomeric binding site that transiently accommodates folded Tat precursor proteins before their translocation. This is Sec-independent protein translocase protein TatB from Azoarcus sp. (strain BH72).